The primary structure comprises 180 residues: Putative phycocyanobilin lyase CpcS 2 (180 aa).

The protein belongs to the CpcS/CpeS biliprotein lyase family.

In terms of biological role, covalently attaches a chromophore to Cys residue(s) of phycobiliproteins (Potential). In vitro does not act as a chromophore lyase for ApcA1, ApcA2, ApcB, ApcD, ApcF, CpcB or PecB, the lyase activity is therefore unsure. The sequence is that of Putative phycocyanobilin lyase CpcS 2 (cpeS2) from Nostoc sp. (strain PCC 7120 / SAG 25.82 / UTEX 2576).